The chain runs to 232 residues: Large ribosomal subunit protein uL1 (232 aa).

This sequence belongs to the universal ribosomal protein uL1 family. In terms of assembly, part of the 50S ribosomal subunit.

Functionally, binds directly to 23S rRNA. The L1 stalk is quite mobile in the ribosome, and is involved in E site tRNA release. Protein L1 is also a translational repressor protein, it controls the translation of the L11 operon by binding to its mRNA. The polypeptide is Large ribosomal subunit protein uL1 (Chlamydia caviae (strain ATCC VR-813 / DSM 19441 / 03DC25 / GPIC) (Chlamydophila caviae)).